A 353-amino-acid polypeptide reads, in one-letter code: Photosystem II protein D1 (353 aa).

Position 2 is an N-acetylthreonine (threonine 2). Threonine 2 carries the phosphothreonine modification. The next 3 membrane-spanning stretches (helical) occupy residues 29-46, 118-133, and 142-156; these read YIGWFGVLMIPTLLTATS, HFLLGVACYMGREWEL, and WIAVAYSAPVAAATA. Histidine 118 lines the chlorophyll a pocket. Residue tyrosine 126 coordinates pheophytin a. [CaMn4O5] cluster contacts are provided by aspartate 170 and glutamate 189. The helical transmembrane segment at 197 to 218 threads the bilayer; sequence FHMLGVAGVFGGSLFSAMHGSL. A chlorophyll a-binding site is contributed by histidine 198. A quinone is bound by residues histidine 215 and 264–265; that span reads SF. Histidine 215 contributes to the Fe cation binding site. A Fe cation-binding site is contributed by histidine 272. The helical transmembrane segment at 274–288 threads the bilayer; that stretch reads FLAAWPVVGIWFTAL. Histidine 332, glutamate 333, aspartate 342, and alanine 344 together coordinate [CaMn4O5] cluster. The propeptide occupies 345–353; sequence ALEVPSLNG.

It belongs to the reaction center PufL/M/PsbA/D family. PSII is composed of 1 copy each of membrane proteins PsbA, PsbB, PsbC, PsbD, PsbE, PsbF, PsbH, PsbI, PsbJ, PsbK, PsbL, PsbM, PsbT, PsbX, PsbY, PsbZ, Psb30/Ycf12, at least 3 peripheral proteins of the oxygen-evolving complex and a large number of cofactors. It forms dimeric complexes. The cofactor is The D1/D2 heterodimer binds P680, chlorophylls that are the primary electron donor of PSII, and subsequent electron acceptors. It shares a non-heme iron and each subunit binds pheophytin, quinone, additional chlorophylls, carotenoids and lipids. D1 provides most of the ligands for the Mn4-Ca-O5 cluster of the oxygen-evolving complex (OEC). There is also a Cl(-1) ion associated with D1 and D2, which is required for oxygen evolution. The PSII complex binds additional chlorophylls, carotenoids and specific lipids.. Post-translationally, tyr-161 forms a radical intermediate that is referred to as redox-active TyrZ, YZ or Y-Z. C-terminally processed by CTPA; processing is essential to allow assembly of the oxygen-evolving complex and thus photosynthetic growth.

The protein resides in the plastid. It localises to the chloroplast thylakoid membrane. The enzyme catalyses 2 a plastoquinone + 4 hnu + 2 H2O = 2 a plastoquinol + O2. In terms of biological role, photosystem II (PSII) is a light-driven water:plastoquinone oxidoreductase that uses light energy to abstract electrons from H(2)O, generating O(2) and a proton gradient subsequently used for ATP formation. It consists of a core antenna complex that captures photons, and an electron transfer chain that converts photonic excitation into a charge separation. The D1/D2 (PsbA/PsbD) reaction center heterodimer binds P680, the primary electron donor of PSII as well as several subsequent electron acceptors. This is Photosystem II protein D1 from Oryza nivara (Indian wild rice).